Reading from the N-terminus, the 88-residue chain is Small ribosomal subunit protein uS19 (88 aa).

It belongs to the universal ribosomal protein uS19 family.

In terms of biological role, protein S19 forms a complex with S13 that binds strongly to the 16S ribosomal RNA. The chain is Small ribosomal subunit protein uS19 from Carsonella ruddii (strain PV).